Here is a 151-residue protein sequence, read N- to C-terminus: Large ribosomal subunit protein uL16 (151 aa).

The protein belongs to the universal ribosomal protein uL16 family. Part of the 50S ribosomal subunit.

Functionally, binds 23S rRNA and is also seen to make contacts with the A and possibly P site tRNAs. In Chloroflexus aurantiacus (strain ATCC 29364 / DSM 637 / Y-400-fl), this protein is Large ribosomal subunit protein uL16.